Consider the following 288-residue polypeptide: MGQKVHPHGFRLGISTDWKSRWFADKLYKDYVGEDVKIRRMMSKGLERAGISKVDIERTRDRVRVDIHTARPGIVIGRKGAEADRIRGKLEKLTGKQVQLNIIEVKSPESDAQLVAQGVAEQLSSRVSFRRAMRKAMQSAMKNPVCKGIRVQVSGRLGGAEMSRTEFYREGRVPLHTLRANIEYGFFEARTTFGRIGVKVWIYKGDAVPGRETPAEAPSRPRRERGDRSERPRRGRSGSSGTTAGGTEAGRAAATTIAQAAETPSGESVDAGAVASAATQPAETQQEG.

The KH type-2 domain maps to 38–106 (IRRMMSKGLE…QVQLNIIEVK (69 aa)). The disordered stretch occupies residues 209–288 (PGRETPAEAP…TQPAETQQEG (80 aa)). A compositionally biased stretch (basic and acidic residues) spans 219–232 (SRPRRERGDRSERP). The span at 249–264 (AGRAAATTIAQAAETP) shows a compositional bias: low complexity. Positions 277–288 (AATQPAETQQEG) are enriched in polar residues.

It belongs to the universal ribosomal protein uS3 family. In terms of assembly, part of the 30S ribosomal subunit. Forms a tight complex with proteins S10 and S14.

Its function is as follows. Binds the lower part of the 30S subunit head. Binds mRNA in the 70S ribosome, positioning it for translation. This is Small ribosomal subunit protein uS3 from Salinispora tropica (strain ATCC BAA-916 / DSM 44818 / JCM 13857 / NBRC 105044 / CNB-440).